The sequence spans 258 residues: Deoxyribose-phosphate aldolase (258 aa).

The active-site Proton donor/acceptor is Asp101. Lys166 functions as the Schiff-base intermediate with acetaldehyde in the catalytic mechanism. Lys200 serves as the catalytic Proton donor/acceptor.

Belongs to the DeoC/FbaB aldolase family. DeoC type 2 subfamily.

Its subcellular location is the cytoplasm. The enzyme catalyses 2-deoxy-D-ribose 5-phosphate = D-glyceraldehyde 3-phosphate + acetaldehyde. It functions in the pathway carbohydrate degradation; 2-deoxy-D-ribose 1-phosphate degradation; D-glyceraldehyde 3-phosphate and acetaldehyde from 2-deoxy-alpha-D-ribose 1-phosphate: step 2/2. Its function is as follows. Catalyzes a reversible aldol reaction between acetaldehyde and D-glyceraldehyde 3-phosphate to generate 2-deoxy-D-ribose 5-phosphate. This chain is Deoxyribose-phosphate aldolase, found in Actinobacillus pleuropneumoniae serotype 3 (strain JL03).